The primary structure comprises 72 residues: Lantibiotic lichenicidin VK21 A2 (72 aa).

The interval 1 to 21 (MKTMKNSAAREAFKGANHPAG) is disordered. Residues 1 to 40 (MKTMKNSAAREAFKGANHPAGMVSEEELKALVGGNDVNPE) constitute a propeptide that is removed on maturation. T41 is subject to 2-oxobutanoic acid. A (Z)-2,3-didehydrobutyrine mark is found at T42, T45, and T46. The lanthionine (Ser-Cys) cross-link spans 47–51 (SSWTC). Position 48 is a 2,3-didehydroalanine (Ser) (S48). (Z)-2,3-didehydrobutyrine is present on residues T53 and T57. Positions 59–63 (SASLC) form a cross-link, lanthionine (Ser-Cys). 2 cross-links (beta-methyllanthionine (Thr-Cys)) span residues 65–68 (TTKC) and 69–72 (TSRC). (Z)-2,3-didehydrobutyrine is present on T66.

In terms of processing, maturation of lantibiotics involves the enzymatic conversion of Thr, and Ser into dehydrated AA and the formation of thioether bonds with cysteine. This is followed by membrane translocation and cleavage of the modified precursor. The 2,3-didehydrobutyrines are determined to be the Z-isomers.

It is found in the secreted. Functionally, lanthionine-containing peptide antibiotic (lantibiotic) active on Gram-positive bacteria. The bactericidal activity of lantibiotics is based on depolarization of energized bacterial cytoplasmic membranes, initiated by the formation of aqueous transmembrane pores. When present individually, LchA2 exhibits activity towards B.subtilis L1 (IC(50)=30 uM), Rhodococcus sp. SS2 (IC(50)=16.6 uM), M.luteus B1314 (IC(50)=2.6 uM), B.megaterium VKM41 (IC(50)=2 uM), S.aureus 209p (IC(50)=20 uM), B.pumilus 2001, B.globigii I, B.amyloliquefaciens I, M.smegmatis 1171 and M.phlei 1291. However, when combined with LchA1, it displays much stronger activity against B.subtilis L1 (IC(50)=0.64 uM), Rhodococcus sp. SS2 (IC(50)=0.64 uM), M.luteus B1314 (IC(50)=0.09 uM), B.megaterium VKM41 (IC(50)=0.12 uM) and S.aureus 209p (IC(50)=0.64 uM). The activity of the combined LchA1 and LchA2 peptides is strongest at a molar ratio of 1. Even when applied at 17-fold concentration of the highest IC(50) values for Gram-positive bacteria, neither the individual nor the combined peptides display activity against Gram-negative bacteria P.aeruginosa PAO1, P.putida I-97 or E.coli C600. The chain is Lantibiotic lichenicidin VK21 A2 from Bacillus licheniformis.